A 575-amino-acid polypeptide reads, in one-letter code: Acyloxyacyl hydrolase (575 aa).

The N-terminal stretch at 1–25 (MKSPWRILVVSPLLLLPLHSSTSRA) is a signal peptide. A propeptide spanning residues 26–34 (HDNQPGTIR) is cleaved from the precursor. Residues 36 to 117 (DHYTCVGCVL…HTLEFCKQEP (82 aa)) form the Saposin B-type domain. Residues 37-69 (HYTCVGCVLVVSVIEQLAQVHNSTVQASMERLC) form an important for enzyme activity, localization to cytoplasmic vesicles, and protein stability region. Intrachain disulfides connect C40-C113, C43-C107, C69-C82, C122-C453, C159-C168, C205-C229, C248-C328, and C375-C459. A glycan (N-linked (GlcNAc...) asparagine) is linked at N58. The segment at 172–176 (KLAIK) is lipopolysaccharide binding. Ca(2+) contacts are provided by D183, D185, D187, Y189, D204, N206, D207, D209, V212, D222, D226, N228, N230, I232, and E244. N-linked (GlcNAc...) asparagine glycosylation is present at N206. S262 is an active-site residue. An N-linked (GlcNAc...) asparagine glycan is attached at N466.

Heterodimer of the large and small subunits; disulfide-linked. It depends on Ca(2+) as a cofactor. Cleaved into a large and a small subunit. Post-translationally, the small subunit is N-glycosylated.

The protein localises to the secreted. Its subcellular location is the cytoplasmic vesicle. It carries out the reaction a 3-(acyloxy)acyl derivative of bacterial toxin + H2O = a 3-hydroxyacyl derivative of bacterial toxin + a fatty acid + H(+). Removes the secondary (acyloxyacyl-linked) fatty acyl chains from the lipid A region of bacterial lipopolysaccharides (LPS). By breaking down LPS, terminates the host response to bacterial infection and prevents prolonged and damaging inflammatory responses. In peritoneal macrophages, seems to be important for recovery from a state of immune tolerance following infection by Gram-negative bacteria. In Oryctolagus cuniculus (Rabbit), this protein is Acyloxyacyl hydrolase.